The following is a 575-amino-acid chain: Sulfite reductase [NADPH] hemoprotein beta-component (575 aa).

Residues cysteine 440, cysteine 446, cysteine 485, and cysteine 489 each contribute to the [4Fe-4S] cluster site. Position 489 (cysteine 489) interacts with siroheme.

The protein belongs to the nitrite and sulfite reductase 4Fe-4S domain family. Alpha(8)-beta(8). The alpha component is a flavoprotein, the beta component is a hemoprotein. Siroheme serves as cofactor. [4Fe-4S] cluster is required as a cofactor.

It catalyses the reaction hydrogen sulfide + 3 NADP(+) + 3 H2O = sulfite + 3 NADPH + 4 H(+). It functions in the pathway sulfur metabolism; hydrogen sulfide biosynthesis; hydrogen sulfide from sulfite (NADPH route): step 1/1. In terms of biological role, component of the sulfite reductase complex that catalyzes the 6-electron reduction of sulfite to sulfide. This is one of several activities required for the biosynthesis of L-cysteine from sulfate. This is Sulfite reductase [NADPH] hemoprotein beta-component from Chromohalobacter salexigens (strain ATCC BAA-138 / DSM 3043 / CIP 106854 / NCIMB 13768 / 1H11).